A 318-amino-acid chain; its full sequence is Malate dehydrogenase (318 aa).

NAD(+)-binding positions include 10-15 (GAGNIG) and D34. Positions 83 and 89 each coordinate substrate. Residues N96 and 119–121 (ITN) contribute to the NAD(+) site. Positions 121 and 152 each coordinate substrate. H176 (proton acceptor) is an active-site residue.

The protein belongs to the LDH/MDH superfamily. MDH type 3 family.

The enzyme catalyses (S)-malate + NAD(+) = oxaloacetate + NADH + H(+). In terms of biological role, catalyzes the reversible oxidation of malate to oxaloacetate. The sequence is that of Malate dehydrogenase from Rhodospirillum rubrum (strain ATCC 11170 / ATH 1.1.1 / DSM 467 / LMG 4362 / NCIMB 8255 / S1).